Reading from the N-terminus, the 390-residue chain is Mannitol-1-phosphate 5-dehydrogenase (390 aa).

Residue 7 to 18 participates in NAD(+) binding; that stretch reads AVHFGGGNIGRG. Lys-216 is an active-site residue.

The protein belongs to the mannitol dehydrogenase family. Monomer.

The catalysed reaction is D-mannitol 1-phosphate + NAD(+) = beta-D-fructose 6-phosphate + NADH + H(+). In terms of biological role, catalyzes the NAD(H)-dependent interconversion of D-fructose 6-phosphate and D-mannitol 1-phosphate in the mannitol metabolic pathway. Required for the process of sporulation on senescing leaf material. This Phaeosphaeria nodorum (strain SN15 / ATCC MYA-4574 / FGSC 10173) (Glume blotch fungus) protein is Mannitol-1-phosphate 5-dehydrogenase (mpd1).